The primary structure comprises 77 residues: Putative defensin-like protein 129 (77 aa).

The N-terminal stretch at 1–25 is a signal peptide; sequence MTKNTALTIFMVVLVIEMVMEETQG. Cystine bridges form between cysteine 28–cysteine 77, cysteine 37–cysteine 59, cysteine 42–cysteine 71, and cysteine 46–cysteine 73.

Belongs to the DEFL family.

It localises to the secreted. The sequence is that of Putative defensin-like protein 129 (LCR13) from Arabidopsis thaliana (Mouse-ear cress).